The following is a 576-amino-acid chain: RING finger and SPRY domain-containing protein 1 (576 aa).

The signal sequence occupies residues 1–16 (MIVFGWAVFLASRSLG). Ser-50 bears the Phosphoserine mark. The interval 50 to 99 (SGTDDSVDTQQQQAENSAVPTADTRSQPRDPVRPPRRGRGPHEPRRKKQN) is disordered. Polar residues predominate over residues 57-68 (DTQQQQAENSAV). Basic residues predominate over residues 83–97 (PPRRGRGPHEPRRKK). A B30.2/SPRY domain is found at 300 to 483 (LFLKEGRQLT…CEFNFGAKPF (184 aa)). N-linked (GlcNAc...) asparagine glycosylation occurs at Asn-314. The segment at 527 to 562 (CSLCCDEVADTQLKPCGHSDLCMDCALQLETCPLCR) adopts an RING-type zinc-finger fold.

The protein localises to the secreted. The protein is RING finger and SPRY domain-containing protein 1 (RSPRY1) of Homo sapiens (Human).